Consider the following 167-residue polypeptide: NAD(P)H-quinone oxidoreductase subunit I, chloroplastic (167 aa).

4Fe-4S ferredoxin-type domains lie at 55–84 (GRIH…VDWK) and 95–124 (LNYS…MTEE). The [4Fe-4S] cluster site is built by Cys-64, Cys-67, Cys-70, Cys-74, Cys-104, Cys-107, Cys-110, and Cys-114.

Belongs to the complex I 23 kDa subunit family. As to quaternary structure, NDH is composed of at least 16 different subunits, 5 of which are encoded in the nucleus. It depends on [4Fe-4S] cluster as a cofactor.

It localises to the plastid. Its subcellular location is the chloroplast thylakoid membrane. It catalyses the reaction a plastoquinone + NADH + (n+1) H(+)(in) = a plastoquinol + NAD(+) + n H(+)(out). It carries out the reaction a plastoquinone + NADPH + (n+1) H(+)(in) = a plastoquinol + NADP(+) + n H(+)(out). NDH shuttles electrons from NAD(P)H:plastoquinone, via FMN and iron-sulfur (Fe-S) centers, to quinones in the photosynthetic chain and possibly in a chloroplast respiratory chain. The immediate electron acceptor for the enzyme in this species is believed to be plastoquinone. Couples the redox reaction to proton translocation, and thus conserves the redox energy in a proton gradient. This chain is NAD(P)H-quinone oxidoreductase subunit I, chloroplastic, found in Atropa belladonna (Belladonna).